We begin with the raw amino-acid sequence, 478 residues long: Cytochrome P450 monooxygenase asqL (478 aa).

Cys-407 provides a ligand contact to heme.

The protein belongs to the cytochrome P450 family. Heme is required as a cofactor.

Its pathway is secondary metabolite biosynthesis. The protein operates within alkaloid biosynthesis. It participates in mycotoxin biosynthesis. Functionally, cytochrome P450 monooxygenase; part of the gene cluster that mediates the biosynthesis of the aspoquinolone mycotoxins. The role of asqL within the aspoquinolone pathway has still to be determined. The first step of the pathway is catalyzed by the nonribosomal peptide synthetase asqK that condenses anthranilic acid and O-methyl-L-tyrosine to produce 4'-methoxycyclopeptin. 4'-methoxycyclopeptin is then converted to 4'-methoxydehydrocyclopeptin by the ketoglutarate-dependent dioxygenase asqJ. AsqJ also converts its first product 4'-methoxydehydrocyclopeptin to 4'-methoxycyclopenin. The following conversion of 4'-methoxycyclopenin into 4'-methoxyviridicatin is catalyzed by the cyclopenase asqI. 4'-methoxyviridicatin is the precursor of quinolone natural products, and is further converted to quinolinone B. The prenyltransferase asqH1 then catalyzes the canonical Friedel-Crafts alkylation of quinolinone B with dimethylallyl cation to yield dimethylallyl quinolone, which is subjected to FAD-dependent dehydrogenation by the FAD-linked oxidoreductase asqF to yield conjugated aryl diene. The delta(3') double bond then serves as the site of the second alkylation with DMAPP catalyzed by the prenyltransferase asqH2 to yield a carbenium ion intermediate, which can be attacked by H(2)O to yield a styrenyl quinolone containing a C3'-hydroxyprenyl chain. The FAD-dependent monooxygenase asqG performs epoxidation of the terminal C7'-C8' olefin. Finally, after dehydratation of the epoxide at C3 by asqC, the quinolone epoxide rearrangement protein asqO catalyzes an enzymatic 3-exo-tet cyclization to yield the cyclopropyl-THF ring system in aspoquinolone. This Emericella nidulans (strain FGSC A4 / ATCC 38163 / CBS 112.46 / NRRL 194 / M139) (Aspergillus nidulans) protein is Cytochrome P450 monooxygenase asqL.